The chain runs to 318 residues: Probable ABC transporter permease protein MG189 (318 aa).

Helical transmembrane passes span 42–62 (VLGF…VVSF), 98–118 (AIVV…FFTI), 134–154 (LVWF…LIGQ), 169–189 (PLIV…GFMY), 230–250 (VGIL…LLLG), and 282–302 (LKMS…FLFH). An ABC transmembrane type-1 domain is found at 99–301 (IVVNTLVTVL…LPMFIIYFLF (203 aa)).

Belongs to the binding-protein-dependent transport system permease family. MalFG subfamily.

Its subcellular location is the cell membrane. Functionally, probably part of a binding-protein-dependent transport system. Probably responsible for the translocation of the substrate across the membrane. The sequence is that of Probable ABC transporter permease protein MG189 from Mycoplasma genitalium (strain ATCC 33530 / DSM 19775 / NCTC 10195 / G37) (Mycoplasmoides genitalium).